A 1025-amino-acid polypeptide reads, in one-letter code: Error-prone DNA polymerase (1025 aa).

The protein belongs to the DNA polymerase type-C family. DnaE2 subfamily.

It localises to the cytoplasm. The catalysed reaction is DNA(n) + a 2'-deoxyribonucleoside 5'-triphosphate = DNA(n+1) + diphosphate. In terms of biological role, DNA polymerase involved in damage-induced mutagenesis and translesion synthesis (TLS). It is not the major replicative DNA polymerase. This Alkalilimnicola ehrlichii (strain ATCC BAA-1101 / DSM 17681 / MLHE-1) protein is Error-prone DNA polymerase.